We begin with the raw amino-acid sequence, 440 residues long: Deoxyguanosinetriphosphate triphosphohydrolase-like protein (440 aa).

In terms of domain architecture, HD spans 62–255; that stretch reads RLTHSLEAAQ…MELADDIAYG (194 aa).

The protein belongs to the dGTPase family. Type 2 subfamily.

This Vibrio parahaemolyticus serotype O3:K6 (strain RIMD 2210633) protein is Deoxyguanosinetriphosphate triphosphohydrolase-like protein.